A 377-amino-acid chain; its full sequence is DNA replication and repair protein RecF (377 aa).

Residue 30 to 37 (GQNAQGKS) coordinates ATP.

Belongs to the RecF family.

It localises to the cytoplasm. The RecF protein is involved in DNA metabolism; it is required for DNA replication and normal SOS inducibility. RecF binds preferentially to single-stranded, linear DNA. It also seems to bind ATP. This is DNA replication and repair protein RecF from Cyanothece sp. (strain PCC 7425 / ATCC 29141).